A 73-amino-acid polypeptide reads, in one-letter code: MNTRWQQAGQKVKPGFKLAGKLVLLTALRYGPAGVAGWAIKSVARRPLKMLLAVALEPLLSRAANKLAQRYKR.

It belongs to the PspD family.

The protein localises to the cytoplasm. Its subcellular location is the cell inner membrane. Functionally, the phage shock protein (psp) operon (pspABCDE) may play a significant role in the competition for survival under nutrient- or energy-limited conditions. The polypeptide is Phage shock protein D (pspD) (Escherichia coli O157:H7).